The sequence spans 450 residues: Glucose-6-phosphate isomerase (450 aa).

Threonine 39 is modified (phosphothreonine). Catalysis depends on glutamate 291, which acts as the Proton donor. Residues histidine 312 and lysine 426 contribute to the active site.

This sequence belongs to the GPI family.

It is found in the cytoplasm. It carries out the reaction alpha-D-glucose 6-phosphate = beta-D-fructose 6-phosphate. The protein operates within carbohydrate biosynthesis; gluconeogenesis. It functions in the pathway carbohydrate degradation; glycolysis; D-glyceraldehyde 3-phosphate and glycerone phosphate from D-glucose: step 2/4. Catalyzes the reversible isomerization of glucose-6-phosphate to fructose-6-phosphate. This Bacillus cereus (strain AH187) protein is Glucose-6-phosphate isomerase.